Here is a 466-residue protein sequence, read N- to C-terminus: cAMP-dependent protein kinase regulatory subunit (466 aa).

The interval Q25–F231 is dimerization and phosphorylation. The span at A71 to A80 shows a compositional bias: low complexity. Disordered stretches follow at residues A71 to S90, S109 to F139, N154 to P179, and S193 to E218. The segment covering N81 to S90 has biased composition (polar residues). Residues S109–S118 show a composition bias toward basic and acidic residues. S193 is modified (phosphoserine). Positions Q200 to E218 are enriched in basic and acidic residues. Residues L232 to N347, E297, R306, I350 to H466, E416, and R425 each bind 3',5'-cyclic AMP.

This sequence belongs to the cAMP-dependent kinase regulatory chain family. In terms of assembly, tetramer, composed of 2 regulatory (R) and 2 catalytic (C) subunits. In the presence of cAMP it dissociates into 2 active monomeric C subunits and an R dimer.

This chain is cAMP-dependent protein kinase regulatory subunit (PKAR), found in Kluyveromyces lactis (strain ATCC 8585 / CBS 2359 / DSM 70799 / NBRC 1267 / NRRL Y-1140 / WM37) (Yeast).